The following is a 177-amino-acid chain: Large ribosomal subunit protein uL6 (177 aa).

The protein belongs to the universal ribosomal protein uL6 family. In terms of assembly, part of the 50S ribosomal subunit.

Its function is as follows. This protein binds to the 23S rRNA, and is important in its secondary structure. It is located near the subunit interface in the base of the L7/L12 stalk, and near the tRNA binding site of the peptidyltransferase center. The protein is Large ribosomal subunit protein uL6 of Cellvibrio japonicus (strain Ueda107) (Pseudomonas fluorescens subsp. cellulosa).